Consider the following 165-residue polypeptide: Ureidoglycolate lyase (165 aa).

It belongs to the ureidoglycolate lyase family. Homodimer. Requires Ni(2+) as cofactor.

The enzyme catalyses (S)-ureidoglycolate = urea + glyoxylate. It participates in nitrogen metabolism; (S)-allantoin degradation. Catalyzes the catabolism of the allantoin degradation intermediate (S)-ureidoglycolate, generating urea and glyoxylate. Involved in the utilization of allantoin as nitrogen source. The chain is Ureidoglycolate lyase from Chelativorans sp. (strain BNC1).